The following is a 264-amino-acid chain: Sororin (264 aa).

The segment at 1–45 (MAERRTRSGGAAQRSGPRTSLTKPSKSSKRKSGSDLPNSFSEIWP) is disordered. Phosphoserine occurs at positions 20, 32, 34, 78, and 82. The KEN box signature appears at 87–89 (KEN). Position 97 is a phosphothreonine (Thr-97). Residue Ser-106 is modified to Phosphoserine. Phosphothreonine occurs at positions 110, 114, and 159. The FGF motif signature appears at 166–168 (FGF). Ser-222 is modified (phosphoserine). The C-terminal Sororin domain stretch occupies residues 242-264 (LDKWAVAMNAEFEAAEQFELLIE).

This sequence belongs to the sororin family. In terms of assembly, interacts with the APC/C complex. Interacts with the chromatin-bound cohesin complex; the interaction is indirect, occurs after DNA replication and requires acetylation of the cohesin component SMC3. Interacts (via the FGF motif) with PDS5A and PDS5B; the interaction is direct and prevents the interaction of PDS5A with WAPL. In terms of processing, phosphorylated. Phosphorylation, as cells enter mitosis, disrupts the interaction with PDS5A and relieves the inhibition of WAPL by CDCA5. Ubiquitinated by the APC/C complex in G1, leading to its degradation.

The protein resides in the nucleus. Its subcellular location is the chromosome. It is found in the cytoplasm. Its function is as follows. Regulator of sister chromatid cohesion in mitosis stabilizing cohesin complex association with chromatin. May antagonize the action of WAPL which stimulates cohesin dissociation from chromatin. Cohesion ensures that chromosome partitioning is accurate in both meiotic and mitotic cells and plays an important role in DNA repair. Required for efficient DNA double-stranded break repair. In Mus musculus (Mouse), this protein is Sororin (Cdca5).